We begin with the raw amino-acid sequence, 145 residues long: MATDQHSNKSNVSAARKPLSPSPTASAAGLIKINGSPIELVEPEILRFKAFEPILLLGKSRFAGVDMRIRVKGGGHTSQIYAIRQSIAKALVAFYQKYVDEQSKKEIKDILVRYDRTLLVADPRRCEPKKFGGRGARARFQKSYR.

Over residues 1-13 the composition is skewed to polar residues; that stretch reads MATDQHSNKSNVS. Residues 1–24 are disordered; that stretch reads MATDQHSNKSNVSAARKPLSPSPT.

This sequence belongs to the universal ribosomal protein uS9 family.

It is found in the cytoplasm. The polypeptide is Small ribosomal subunit protein uS9 (RPS16) (Lupinus polyphyllus (Large-leaved lupine)).